We begin with the raw amino-acid sequence, 113 residues long: UPF0416 protein RF_0879 (113 aa).

This sequence belongs to the UPF0416 family.

The polypeptide is UPF0416 protein RF_0879 (Rickettsia felis (strain ATCC VR-1525 / URRWXCal2) (Rickettsia azadi)).